Reading from the N-terminus, the 286-residue chain is Acetyl-coenzyme A carboxylase carboxyl transferase subunit beta (286 aa).

One can recognise a CoA carboxyltransferase N-terminal domain in the interval 27–286; it reads LMTKCPKCKL…HSEETNHATI (260 aa). 4 residues coordinate Zn(2+): Cys-31, Cys-34, Cys-50, and Cys-52. The segment at 31-52 adopts a C4-type zinc-finger fold; that stretch reads CPKCKLIQYTKQLEANLKVCVC.

Belongs to the AccD/PCCB family. Acetyl-CoA carboxylase is a heterohexamer composed of biotin carboxyl carrier protein (AccB), biotin carboxylase (AccC) and two subunits each of ACCase subunit alpha (AccA) and ACCase subunit beta (AccD). Zn(2+) serves as cofactor.

The protein resides in the cytoplasm. It carries out the reaction N(6)-carboxybiotinyl-L-lysyl-[protein] + acetyl-CoA = N(6)-biotinyl-L-lysyl-[protein] + malonyl-CoA. Its pathway is lipid metabolism; malonyl-CoA biosynthesis; malonyl-CoA from acetyl-CoA: step 1/1. In terms of biological role, component of the acetyl coenzyme A carboxylase (ACC) complex. Biotin carboxylase (BC) catalyzes the carboxylation of biotin on its carrier protein (BCCP) and then the CO(2) group is transferred by the transcarboxylase to acetyl-CoA to form malonyl-CoA. The chain is Acetyl-coenzyme A carboxylase carboxyl transferase subunit beta from Exiguobacterium sibiricum (strain DSM 17290 / CCUG 55495 / CIP 109462 / JCM 13490 / 255-15).